The primary structure comprises 458 residues: UPF0210 protein Mevan_0738 (458 aa).

The protein belongs to the UPF0210 family.

This is UPF0210 protein Mevan_0738 from Methanococcus vannielii (strain ATCC 35089 / DSM 1224 / JCM 13029 / OCM 148 / SB).